Reading from the N-terminus, the 142-residue chain is UPF0102 protein PsycPRwf_0497 (142 aa).

This sequence belongs to the UPF0102 family.

The chain is UPF0102 protein PsycPRwf_0497 from Psychrobacter sp. (strain PRwf-1).